A 161-amino-acid chain; its full sequence is Troponin C, slow skeletal and cardiac muscles (161 aa).

Position 1 is an N-acetylmethionine (Met1). EF-hand domains lie at Gln16–Asn51, Pro52–Asp87, Lys92–Thr127, and Ile128–Glu161. Residues Asp65, Asp67, Ser69, Thr71, and Glu76 each contribute to the Ca(2+) site. Ser98 bears the Phosphoserine mark. Ca(2+) contacts are provided by Asp105, Asn107, Asp109, Tyr111, Glu116, Asp141, Asn143, Asp145, Arg147, and Glu152.

Belongs to the troponin C family.

In terms of biological role, troponin is the central regulatory protein of striated muscle contraction. Tn consists of three components: Tn-I which is the inhibitor of actomyosin ATPase, Tn-T which contains the binding site for tropomyosin and Tn-C. The binding of calcium to Tn-C abolishes the inhibitory action of Tn on actin filaments. The sequence is that of Troponin C, slow skeletal and cardiac muscles (Tnnc1) from Mus musculus (Mouse).